The primary structure comprises 758 residues: 1-phosphatidylinositol 4,5-bisphosphate phosphodiesterase delta-4 (758 aa).

The PH domain maps to 16 to 124; it reads QLMQAGSPMR…WIQGLEKLIE (109 aa). The interval 26–53 is substrate binding; that stretch reads KVKSRSWKKQRYFKLQEDCMTIWYNSKK. 3 EF-hand domains span residues 134–169, 170–205, and 206–237; these read LMDQWICDWFQKADKNKDGRMNFKEVQDLLKMMNVD, MSEHHAFRLFQMADKSESGTLEGEEFVLFYKALTQR, and DEVLKIFQDFSKDGKKLTLLEFVDFLQQGQLE. Ca(2+) is bound by residues Asp147, Asn149, Asp151, Arg153, Glu158, Asp183, Ser185, Ser187, Thr189, and Glu194. The GBA signature appears at 213 to 243; sequence QDFSKDGKKLTLLEFVDFLQQGQLEEENTEE. One can recognise a PI-PLC X-box domain in the interval 290-435; it reads QDMMQPLCHY…LRGKILLKGK (146 aa). His305 is a catalytic residue. Residues Asn306, Glu335, and Asp337 each coordinate Ca(2+). His350 is a catalytic residue. Glu384 provides a ligand contact to Ca(2+). Substrate contacts are provided by Lys433 and Lys435. The segment covering 446–468 has biased composition (acidic residues); it reads EQPDDSLGEVSDEEENIEVEEER. Residues 446-479 form a disordered region; sequence EQPDDSLGEVSDEEENIEVEEERNEDKKRAKKSK. A PI-PLC Y-box domain is found at 486 to 602; the sequence is LSDCVIYCKS…GYVLKPSFMR (117 aa). The substrate site is built by Ser515 and Arg542. Residues 602–731 form the C2 domain; that stretch reads RHVETTFNPD…SGYRHIHLLS (130 aa). Ca(2+)-binding residues include Ile645, Asp647, Asn671, Asp700, Tyr701, and Asp702. The short motif at 726–729 is the PDZ-binding element; that stretch reads HIHL.

It depends on Ca(2+) as a cofactor.

The protein localises to the membrane. The protein resides in the nucleus. It is found in the cytoplasm. It localises to the endoplasmic reticulum. The enzyme catalyses a 1,2-diacyl-sn-glycero-3-phospho-(1D-myo-inositol-4,5-bisphosphate) + H2O = 1D-myo-inositol 1,4,5-trisphosphate + a 1,2-diacyl-sn-glycerol + H(+). It catalyses the reaction a 1,2-diacyl-sn-glycero-3-phospho-(1D-myo-inositol) + H2O = 1D-myo-inositol 1-phosphate + a 1,2-diacyl-sn-glycerol + H(+). Hydrolyzes the phosphatidylinositol 4,5-bisphosphate (PIP2) to generate 2 second messenger molecules diacylglycerol (DAG) and inositol 1,4,5-trisphosphate (IP3). DAG mediates the activation of protein kinase C (PKC), while IP3 releases Ca(2+) from intracellular stores. The protein is 1-phosphatidylinositol 4,5-bisphosphate phosphodiesterase delta-4 (plcd4) of Xenopus laevis (African clawed frog).